Consider the following 156-residue polypeptide: Small ribosomal subunit protein uS7 (156 aa).

Belongs to the universal ribosomal protein uS7 family. As to quaternary structure, part of the 30S ribosomal subunit. Contacts proteins S9 and S11.

Its function is as follows. One of the primary rRNA binding proteins, it binds directly to 16S rRNA where it nucleates assembly of the head domain of the 30S subunit. Is located at the subunit interface close to the decoding center, probably blocks exit of the E-site tRNA. In Synechococcus sp. (strain CC9311), this protein is Small ribosomal subunit protein uS7.